Here is a 356-residue protein sequence, read N- to C-terminus: MVSLLQEIDTEHEDMVHHAALDFYGLLLATCSSDGSVRIFHSRKNNKALAELKGHQGPVWQVAWAHPKFGNILASCSYDRKVIVWKSTTPRDWTKLYEYSNHDSSVNSVDFAPSEYGLVLACASSDGSVSVLTCNTEYGVWDAKKIPNAHTIGVNAISWCPAQAPDPAFDQRVTSRSAAVKRLVSGGCDNLVKIWREDNDRWVEEHRLEAHSDWVRDVAWAPSIGLPRSQIATASQDRHVIVWSSNADLSEWTSTVLHTFDDAVWSISWSTTGNILAVTGGDNNVTLWKENTEGQWIRINYESGTAIQSKQPSHLPHSHSQQQQALQQHQQQAPSHPGPSSDSEHSSNLSNSQLSN.

WD repeat units lie at residues 11–50, 54–95, 101–142, 149–205, 210–253, and 259–298; these read EHED…KALA, GHQG…DWTK, NHDS…GVWD, AHTI…WVEE, AHSD…SEWT, and TFDD…QWIR. The interval 307–356 is disordered; sequence IQSKQPSHLPHSHSQQQQALQQHQQQAPSHPGPSSDSEHSSNLSNSQLSN. Over residues 308-356 the composition is skewed to low complexity; the sequence is QSKQPSHLPHSHSQQQQALQQHQQQAPSHPGPSSDSEHSSNLSNSQLSN.

It belongs to the WD repeat SEC13 family. In terms of assembly, probable component of the nuclear pore complex (NPC). Component of the GATOR complex consisting of mio, Nup44A/Seh1, Im11, Nplr3, Nplr2, Wdr24, Wdr59 and Sec13. Within the GATOR complex, probable component of the GATOR2 subcomplex which is likely composed of mio, Nup44A/Seh1, Wdr24, Wdr59 and Sec13. Interacts with msk. Interacts (preferentially when phosphorylated) with Mad. The GATOR2 complex associates with unmet in the absence of S-adenosyl-L-methionine; the mio-Wdr24-Nup44A subcomplex is essential and sufficient for this interaction while Wdr59 and Sec13 are dispensable. This association acts as a nutrient sensor to inhibit mTORC1 signaling in the absence of methionine. In terms of tissue distribution, salivary glands.

The protein resides in the nucleus envelope. It is found in the nucleus. Its subcellular location is the nucleoplasm. It localises to the cytoplasm. The protein localises to the cytoskeleton. The protein resides in the microtubule organizing center. It is found in the centrosome. Its subcellular location is the nuclear pore complex. It localises to the cytoplasmic vesicle. The protein localises to the COPII-coated vesicle membrane. The protein resides in the endoplasmic reticulum membrane. It is found in the lysosome membrane. Functionally, functions as a component of the nuclear pore complex (NPC) and the COPII coat. At the endoplasmic reticulum, SEC13 is involved in the biogenesis of COPII-coated vesicles. Recruited to transcriptionally active chromatin at the time of transcription initiation by RNA polymerase II. Required for proper expression of ecdysone-responsive genes such as Eip74EF and Eip75B during larval development. Required for reactivation of transcription after heat shock. Required for nuclear import of phosphorylated Mad via importin msk. Has no role in classical nuclear localization signal (cNLS)-dependent nuclear import via importin-beta. In terms of biological role, a component of the GATOR subcomplex GATOR2 which functions as an activator of the amino acid-sensing branch of the mTORC1 signaling pathway. The two GATOR subcomplexes, GATOR1 and GATOR2, regulate the mTORC1 pathway in order to mediate metabolic homeostasis, female gametogenesis and the response to amino acid limitation and complete starvation. GATOR2 activates the mTORC1 signaling pathway through the inhibition of the GATOR1 subcomplex, controlling the switch to cell proliferation and growth under nutrient replete conditions and during female oocyte development. The chain is Protein SEC13 homolog from Drosophila melanogaster (Fruit fly).